Reading from the N-terminus, the 507-residue chain is Histidine ammonia-lyase (507 aa).

The 5-imidazolinone (Ala-Gly) cross-link spans A141 to G143. Position 142 is a 2,3-didehydroalanine (Ser) (S142).

This sequence belongs to the PAL/histidase family. Contains an active site 4-methylidene-imidazol-5-one (MIO), which is formed autocatalytically by cyclization and dehydration of residues Ala-Ser-Gly.

It is found in the cytoplasm. The enzyme catalyses L-histidine = trans-urocanate + NH4(+). Its pathway is amino-acid degradation; L-histidine degradation into L-glutamate; N-formimidoyl-L-glutamate from L-histidine: step 1/3. The chain is Histidine ammonia-lyase from Cereibacter sphaeroides (strain KD131 / KCTC 12085) (Rhodobacter sphaeroides).